A 148-amino-acid chain; its full sequence is uncharacterized protein (148 aa).

In terms of domain architecture, HTH asnC-type spans 4 to 65 (LDKVDIQLVK…IPDLDKLGYM (62 aa)). Positions 23-42 (YRELAELMNTTRQRIARRIT) form a DNA-binding region, H-T-H motif.

This is an uncharacterized protein from Pyrococcus abyssi (strain GE5 / Orsay).